Consider the following 85-residue polypeptide: U4-theraphotoxin-Hhn1a (85 aa).

A signal peptide spans 1 to 22 (MKVTLIAILTCAAVLVLHTTAA). Positions 23-48 (EEFEAESQLMEVGMPDTELAAVDEER) are excised as a propeptide. Cystine bridges form between cysteine 52-cysteine 66, cysteine 56-cysteine 77, and cysteine 71-cysteine 82.

It belongs to the neurotoxin 12 (Hwtx-2) family. 02 (Hwtx-2) subfamily. Monomer. As to expression, expressed by the venom gland.

It localises to the secreted. Neurotoxin active on both insects and mammals. This chain is U4-theraphotoxin-Hhn1a, found in Cyriopagopus hainanus (Chinese bird spider).